The following is a 376-amino-acid chain: Succinyl-diaminopimelate desuccinylase (376 aa).

Histidine 67 provides a ligand contact to Zn(2+). Aspartate 69 is a catalytic residue. Residue aspartate 100 participates in Zn(2+) binding. Residue glutamate 134 is the Proton acceptor of the active site. Residues glutamate 135, glutamate 163, and histidine 349 each contribute to the Zn(2+) site.

Belongs to the peptidase M20A family. DapE subfamily. In terms of assembly, homodimer. Zn(2+) serves as cofactor. It depends on Co(2+) as a cofactor.

The catalysed reaction is N-succinyl-(2S,6S)-2,6-diaminopimelate + H2O = (2S,6S)-2,6-diaminopimelate + succinate. The protein operates within amino-acid biosynthesis; L-lysine biosynthesis via DAP pathway; LL-2,6-diaminopimelate from (S)-tetrahydrodipicolinate (succinylase route): step 3/3. Its function is as follows. Catalyzes the hydrolysis of N-succinyl-L,L-diaminopimelic acid (SDAP), forming succinate and LL-2,6-diaminopimelate (DAP), an intermediate involved in the bacterial biosynthesis of lysine and meso-diaminopimelic acid, an essential component of bacterial cell walls. The sequence is that of Succinyl-diaminopimelate desuccinylase from Proteus mirabilis (strain HI4320).